The following is a 439-amino-acid chain: Nitroalkane oxidase (439 aa).

FAD-binding positions include 131–134, 139–141, 169–171, Arg304, 313–314, 375–379, and 400–404; these read LMHS, TAN, WPS, HQ, KAVGM, and LFDGG. Asp402 functions as the Proton acceptor in the catalytic mechanism.

The protein belongs to the acyl-CoA dehydrogenase family. Homotetramer. It depends on FAD as a cofactor.

The catalysed reaction is a primary nitroalkane + O2 + H2O = an aldehyde + nitrite + H2O2 + H(+). It catalyses the reaction a secondary nitroalkane + O2 + H2O = a ketone + nitrite + H2O2 + H(+). With respect to regulation, strongly inhibited by mercury chloride and KCN. In terms of biological role, catalyzes the oxidative denitrification of neutral nitroalkanes, including 3-nitro-2-pentanol, 1-nitropropane, 2-nitropropane, nitroethane and nitrocyclohexane, and may thereby protect the organism against toxic compounds. Has no detectable acyl-CoA dehydrogenase activity. The polypeptide is Nitroalkane oxidase (Fusarium oxysporum (Fusarium vascular wilt)).